Reading from the N-terminus, the 329-residue chain is ATP-dependent (S)-NAD(P)H-hydrate dehydratase (329 aa).

A mitochondrion-targeting transit peptide spans 1–28 (MALGPGCRAVRGCRPVLKRAFSLHKAHS). The 292-residue stretch at 35 to 326 (ILQLVRSVVP…AEVGPAFRRL (292 aa)) folds into the YjeF C-terminal domain. An N6-acetyllysine modification is found at Lys49. Tyr67 carries the phosphotyrosine modification. (6S)-NADPHX is bound by residues Gly135 and 188-194 (NHVEFGR). ATP-binding positions include 228 to 232 (KGEQD) and 247 to 256 (GSGRRCGGQG). Asp257 serves as a coordination point for (6S)-NADPHX.

Belongs to the NnrD/CARKD family. It depends on Mg(2+) as a cofactor.

The protein localises to the mitochondrion. The catalysed reaction is (6S)-NADHX + ATP = ADP + phosphate + NADH + H(+). It carries out the reaction (6S)-NADPHX + ATP = ADP + phosphate + NADPH + H(+). Functionally, catalyzes the dehydration of the S-form of NAD(P)HX at the expense of ATP, which is converted to ADP. Together with NAD(P)HX epimerase, which catalyzes the epimerization of the S- and R-forms, the enzyme allows the repair of both epimers of NAD(P)HX, a damaged form of NAD(P)H that is a result of enzymatic or heat-dependent hydration. The sequence is that of ATP-dependent (S)-NAD(P)H-hydrate dehydratase from Bos taurus (Bovine).